The sequence spans 213 residues: Virulence factor 1 (213 aa).

Its subcellular location is the host mitochondrion. Plays a role in antagonizing the host innate immune response. The chain is Virulence factor 1 from Norovirus (isolate Mouse/NoV/United States/MNV1/2002/GV) (MNV-1).